We begin with the raw amino-acid sequence, 229 residues long: Small ribosomal subunit protein uS3 (229 aa).

One can recognise a KH type-2 domain in the interval 17 to 85 (VKEWIKDEVR…NPQVSVDEVE (69 aa)). The interval 202–229 (LRGESGEDEGDKGDEQGGEAQEAEGAGA) is disordered. Low complexity predominate over residues 219-229 (GEAQEAEGAGA).

It belongs to the universal ribosomal protein uS3 family. As to quaternary structure, part of the 30S ribosomal subunit.

Functionally, binds the lower part of the 30S subunit head. The polypeptide is Small ribosomal subunit protein uS3 (Archaeoglobus fulgidus (strain ATCC 49558 / DSM 4304 / JCM 9628 / NBRC 100126 / VC-16)).